Here is a 705-residue protein sequence, read N- to C-terminus: Frizzled-4 (705 aa).

An N-terminal signal peptide occupies residues 1 to 22 (MKPTCILCLLVVILLHPRISKS). The segment covering 21 to 37 (KSSTSGNPSASSSSSSP) has biased composition (low complexity). The tract at residues 21 to 40 (KSSTSGNPSASSSSSSPPEI) is disordered. At 23 to 233 (STSGNPSASS…FTPAEKHLAE (211 aa)) the chain is on the extracellular side. The 123-residue stretch at 41–163 (PAFRQCETIR…NNHETMCMEG (123 aa)) folds into the FZ domain. 5 disulfides stabilise this stretch: Cys-46-Cys-107, Cys-54-Cys-100, Cys-91-Cys-130, Cys-119-Cys-160, and Cys-123-Cys-147. N-linked (GlcNAc...) asparagine glycosylation is present at Asn-60. The chain crosses the membrane as a helical span at residues 234 to 254 (IWVSTWAYAALGLALVATVCL). Residues 255–270 (LASDGSRLASAKWSRL) lie on the Cytoplasmic side of the membrane. The chain crosses the membrane as a helical span at residues 271–291 (LSPLIWCHNMVTLGWAVRFMV). Over 292 to 322 (GRTGTACGTDPQAPNESLLTVDGLSNASCAS) the chain is Extracellular. N-linked (GlcNAc...) asparagine glycans are attached at residues Asn-306 and Asn-317. The helical transmembrane segment at 323–343 (VFLMRYYFGMAACAWWAVLCL) threads the bilayer. At 344 to 386 (GWHRDIRRHSPDSKGHVVIPSNFGGSPAKRNSAKTAQQDLTQN) the chain is on the cytoplasmic side. The chain crosses the membrane as a helical span at residues 387–407 (NFVCFVAWGLPAFQTSAVIVA). The Extracellular portion of the chain corresponds to 408–430 (RFVDADELLGACFVGNQSDKALQ). Residue Asn-423 is glycosylated (N-linked (GlcNAc...) asparagine). A helical transmembrane segment spans residues 431-451 (ILVATPVFCYWIFGSMNLISG). Residues 452-483 (YLVHCRTKEILRNSNALSVQQQLQQLSAHSSS) are Cytoplasmic-facing. Residues 484 to 504 (GIGIFLFIYGLACAMLLLAVI) form a helical membrane-spanning segment. Residues 505–529 (YEFANIDVWLGSGDTNTPLWPFLLR) lie on the Extracellular side of the membrane. The chain crosses the membrane as a helical span at residues 530-550 (AFMELMLGICCFAWVLGPSIS). Over 551–705 (TLYKRQVSNG…LQQYGNETLL (155 aa)) the chain is Cytoplasmic. The disordered stretch occupies residues 635 to 681 (RSVHHQQRHSPHHHHHQQQQHHQFHPHHNHQHHSTSSHRLYYPPGSY). The span at 636–670 (SVHHQQRHSPHHHHHQQQQHHQFHPHHNHQHHSTS) shows a compositional bias: basic residues. Residues 703–705 (TLL) carry the PDZ-binding motif.

This sequence belongs to the G-protein coupled receptor Fz/Smo family.

It localises to the membrane. Functionally, receptor for Wnt proteins. Most of frizzled receptors are coupled to the beta-catenin canonical signaling pathway, which leads to the activation of disheveled proteins, inhibition of GSK-3 kinase, nuclear accumulation of beta-catenin and activation of Wnt target genes. A second signaling pathway involving PKC and calcium fluxes has been seen for some family members, but it is not yet clear if it represents a distinct pathway or if it can be integrated in the canonical pathway, as PKC seems to be required for Wnt-mediated inactivation of GSK-3 kinase. Both pathways seem to involve interactions with G-proteins. May be involved in transduction and intercellular transmission of polarity information during tissue morphogenesis and/or in differentiated tissues. Required to coordinate the cytoskeletons of epidermal cells to produce a parallel array of cuticular hairs and bristles. The protein is Frizzled-4 (fz4) of Drosophila melanogaster (Fruit fly).